Consider the following 503-residue polypeptide: Glutamate/gamma-aminobutyrate antiporter (503 aa).

33–43 (LHLVFFLLLGG) contacts L-glutamate. The next 7 helical transmembrane spans lie at 35–55 (LVFF…LCAA), 153–173 (FVVG…AYFI), 194–214 (VSTL…EASA), 232–252 (ILLV…VAAV), 366–386 (LTVV…FVLI), 407–427 (IIAG…FVPP), and 440–460 (MILL…YELH).

It belongs to the amino acid-polyamine-organocation (APC) superfamily. Glutamate:GABA antiporter (GGA) (TC 2.A.3.7) family.

Its subcellular location is the cell membrane. It catalyses the reaction 4-aminobutanoate(in) + L-glutamate(out) = 4-aminobutanoate(out) + L-glutamate(in). Its function is as follows. Involved in glutaminase-dependent acid resistance. Exchanges extracellular glutamate (Glu) for intracellular gamma-aminobutyric acid (GABA) under acidic conditions. This chain is Glutamate/gamma-aminobutyrate antiporter, found in Lactococcus lactis subsp. cremoris (strain MG1363).